The following is a 446-amino-acid chain: Enolase (446 aa).

Residues H164 and E173 each contribute to the substrate site. E216 acts as the Proton donor in catalysis. Mg(2+) is bound by residues D251, E302, and D329. Substrate is bound by residues E302 and D329. The active-site Proton acceptor is K354. Substrate-binding positions include 381–384 and K405; that span reads SHRS.

The protein belongs to the enolase family. As to quaternary structure, homodimer. It depends on Mg(2+) as a cofactor.

It localises to the cytoplasm. It carries out the reaction (2R)-2-phosphoglycerate = phosphoenolpyruvate + H2O. Its pathway is carbohydrate degradation; glycolysis; pyruvate from D-glyceraldehyde 3-phosphate: step 4/5. In Oryza sativa subsp. japonica (Rice), this protein is Enolase (ENO1).